Here is a 374-residue protein sequence, read N- to C-terminus: 4-galactosyl-N-acetylglucosaminide 3-alpha-L-fucosyltransferase FUT5 (374 aa).

Over 1–15 the chain is Cytoplasmic; that stretch reads MDLLGAAKPQWPWRR. A helical; Signal-anchor for type II membrane protein membrane pass occupies residues 16–34; the sequence is CLAGLLFQLLVAVCFFSYL. The Lumenal segment spans residues 35-374; the sequence is RVSRDDATGS…TVRSIAAWFN (340 aa). N-linked (GlcNAc...) asparagine glycosylation is found at N60, N105, N167, and N198.

The protein belongs to the glycosyltransferase 10 family.

The protein localises to the golgi apparatus. It localises to the golgi stack membrane. The enzyme catalyses a beta-D-galactosyl-(1-&gt;3)-N-acetyl-beta-D-glucosaminyl derivative + GDP-beta-L-fucose = a beta-D-galactosyl-(1-&gt;3)-[alpha-L-fucosyl-(1-&gt;4)]-N-acetyl-beta-D-glucosaminyl derivative + GDP + H(+). The catalysed reaction is an N-acetyl-alpha-neuraminyl-(2-&gt;3)-beta-D-galactosyl-(1-&gt;4)-N-acetyl-beta-D-glucosaminyl derivative + GDP-beta-L-fucose = an alpha-Neu5Ac-(2-&gt;3)-beta-D-Gal-(1-&gt;4)-[alpha-L-Fuc-(1-&gt;3)]-beta-D-GlcNAc derivative + GDP + H(+). It carries out the reaction an alpha-Neu5Ac-(2-&gt;3)-beta-D-Gal-(1-&gt;4)-beta-D-GlcNAc-(1-&gt;3)-beta-D-Gal-(1-&gt;4)-[alpha-L-Fuc-(1-&gt;3)]-beta-D-GlcNAc derivative + GDP-beta-L-fucose = an alpha-Neu5Ac-(2-&gt;3)-beta-D-Gal-(1-&gt;4)-[alpha-L-Fuc-(1-&gt;3)]-beta-D-GlcNAc-(1-&gt;3)-beta-D-Gal-(1-&gt;4)-[alpha-L-Fuc-(1-&gt;3)]-beta-D-GlcNAc derivative + GDP + H(+). It catalyses the reaction a beta-D-galactosyl-(1-&gt;4)-N-acetyl-beta-D-glucosaminyl derivative + GDP-beta-L-fucose = a beta-D-galactosyl-(1-&gt;4)-[alpha-L-fucosyl-(1-&gt;3)]-N-acetyl-beta-D-glucosaminyl derivative + GDP + H(+). The enzyme catalyses a neolactoside nLc4Cer + GDP-beta-L-fucose = a neolactoside III(3)-alpha-Fuc-nLc4Cer + GDP + H(+). The catalysed reaction is a neolactoside nLc6Cer + GDP-beta-L-fucose = beta-D-galactosyl-(1-&gt;4)-N-acetyl-beta-D-glucosaminyl-(1-&gt;3)-beta-D-galactosyl-(1-&gt;4)-[alpha-L-fucosyl-(1-&gt;3)]-N-acetyl-beta-D-glucosaminyl-(1-&gt;3)-beta-D-galactosyl-(1-&gt;4)-beta-D-glucosyl-(1&lt;-&gt;1')-ceramide + GDP + H(+). It carries out the reaction a neolactoside nLc6Cer(d18:1(4E)) + GDP-beta-L-fucose = a neolactoside III(3)-alpha-Fuc-nLc6Cer(d18:1(4E)) + GDP + H(+). It catalyses the reaction a neolactoside nLc4Cer(d18:1(4E)) + GDP-beta-L-fucose = a neolactoside III(3)-alpha-Fuc-nLc4Cer(d18:1(4E)) + GDP + H(+). The enzyme catalyses a neolactoside VI(3)-alpha-NeuNAc-nLc6Cer + GDP-beta-L-fucose = a neolactoside VI(3)-alpha-NeuAc,III(3)-alphaFuc-nLc6Cer + GDP + H(+). The catalysed reaction is beta-D-galactosyl-(1-&gt;4)-N-acetyl-D-glucosamine + GDP-beta-L-fucose = beta-D-galactosyl-(1-&gt;4)-[alpha-L-fucosyl-(1-&gt;3)]-N-acetyl-D-glucosamine + GDP + H(+). It carries out the reaction N-acetyl-alpha-neuraminosyl-(2-&gt;3)-beta-D-galactosyl-(1-&gt;4)-N-acetyl-beta-D-glucosamine + GDP-beta-L-fucose = N-acetyl-alpha-neuraminosyl-(2-&gt;3)-beta-D-galactosyl-(1-&gt;4)-[alpha-L-fucosyl-(1-&gt;3)]-N-acetyl-beta-D-glucosamine + GDP + H(+). It catalyses the reaction alpha-L-Fuc-(1-&gt;2)-beta-D-Gal-(1-&gt;4)-D-GlcNAc + GDP-beta-L-fucose = alpha-L-Fuc-(1-&gt;2)-beta-D-Gal-(1-&gt;4)-[alpha-L-Fuc-(1-&gt;3)]-D-GlcNAc + GDP + H(+). The enzyme catalyses an alpha-Neu5Ac-(2-&gt;3)-beta-D-Gal-(1-&gt;3)-D-GlcNAc derivative + GDP-beta-L-fucose = an alpha-Neu5Ac-(2-&gt;3)-beta-D-Gal-(1-&gt;3)-[alpha-L-Fuc-(1-&gt;4)]-beta-D-GlcNAc derivative + GDP + H(+). Its pathway is protein modification; protein glycosylation. Functionally, catalyzes preferentially the transfer of L-fucose, from a guanosine diphosphate-beta-L-fucose, to the N-acetyl-beta-D-glucosamine (GlcNAc) of an N-acetyllactosamine unit (type 2 chain) of an oligosaccharide, or a glycoprotein- and a glycolipid-linked N-acetyllactosamine unit via an alpha (1,3) linkage and participates in the surface expression of VIM-2, Lewis X/SSEA-1 and sialyl Lewis X antigens. Preferentially transfers fucose to the GlcNAc of an internal N-acetyllactosamine unit of a poly-N-acetyllactosamine chain acceptor substrate. Also catalyzes to a lesser extend the transfer of L-fucose to the GlcNAc of a type 1 (beta-D-galactosyl-(1-&gt;3)-N-acetyl-beta-D-glucosaminyl) or H-type 1 (alpha-L-Fuc-(1-&gt;2)-beta-D-Gal-(1-&gt;3)-D-GlcNAc) chain oligosaccharide via an alpha (1,4) linkage. Preferentially catalyzes sialylated type 2 oligosaccharide acceptors over neutral type 2 or H type 2 (alpha-L-Fuc-(1-&gt;2)-beta-D-Gal-(1-&gt;4)-D-GlcNAc) oligosaccharide acceptors. Lactose-based structures are also acceptor substrates. The sequence is that of 4-galactosyl-N-acetylglucosaminide 3-alpha-L-fucosyltransferase FUT5 from Hylobates lar (Lar gibbon).